We begin with the raw amino-acid sequence, 344 residues long: DNA polymerase IV (344 aa).

The UmuC domain occupies 2–183; the sequence is IMLIDFDYFF…IKINDIPGIG (182 aa). The Mg(2+) site is built by Asp6 and Asp105. The active site involves Glu106.

Belongs to the DNA polymerase type-Y family. As to quaternary structure, monomer. Requires Mg(2+) as cofactor.

The protein localises to the cytoplasm. It carries out the reaction DNA(n) + a 2'-deoxyribonucleoside 5'-triphosphate = DNA(n+1) + diphosphate. Its function is as follows. Poorly processive, error-prone DNA polymerase involved in untargeted mutagenesis. Copies undamaged DNA at stalled replication forks, which arise in vivo from mismatched or misaligned primer ends. These misaligned primers can be extended by PolIV. Exhibits no 3'-5' exonuclease (proofreading) activity. May be involved in translesional synthesis. In Picrophilus torridus (strain ATCC 700027 / DSM 9790 / JCM 10055 / NBRC 100828 / KAW 2/3), this protein is DNA polymerase IV.